The chain runs to 202 residues: Diadenylate cyclase (202 aa).

A helical transmembrane segment spans residues 6 to 26; the sequence is VFSVIILVLLFLILALTLLFV. One can recognise a DAC domain in the interval 29–185; that stretch reads NKRTRSFVIR…RGVIKTLSSN (157 aa).

This sequence belongs to the adenylate cyclase family. DacB/CdaS subfamily. In terms of assembly, probably oligomerizes.

It is found in the cell membrane. It catalyses the reaction 2 ATP = 3',3'-c-di-AMP + 2 diphosphate. Functionally, catalyzes the condensation of 2 ATP molecules into cyclic di-AMP (c-di-AMP), a second messenger used to regulate differing processes in different bacteria. This chain is Diadenylate cyclase, found in Mycoplasma pneumoniae (strain ATCC 29342 / M129 / Subtype 1) (Mycoplasmoides pneumoniae).